The sequence spans 957 residues: Glycine dehydrogenase (decarboxylating) (957 aa).

Residue Lys-708 is modified to N6-(pyridoxal phosphate)lysine.

Belongs to the GcvP family. The glycine cleavage system is composed of four proteins: P, T, L and H. Pyridoxal 5'-phosphate is required as a cofactor.

The catalysed reaction is N(6)-[(R)-lipoyl]-L-lysyl-[glycine-cleavage complex H protein] + glycine + H(+) = N(6)-[(R)-S(8)-aminomethyldihydrolipoyl]-L-lysyl-[glycine-cleavage complex H protein] + CO2. The glycine cleavage system catalyzes the degradation of glycine. The P protein binds the alpha-amino group of glycine through its pyridoxal phosphate cofactor; CO(2) is released and the remaining methylamine moiety is then transferred to the lipoamide cofactor of the H protein. The chain is Glycine dehydrogenase (decarboxylating) from Escherichia coli O8 (strain IAI1).